Consider the following 346-residue polypeptide: NADPH dehydrogenase (346 aa).

23-26 (SPMC) is a binding site for FMN. Tyr-28 provides a ligand contact to substrate. Positions 60 and 102 each coordinate FMN. A substrate-binding site is contributed by 164–167 (HGAH). FMN contacts are provided by residues Arg-215 and 307 to 308 (GR).

The protein belongs to the NADH:flavin oxidoreductase/NADH oxidase family. NamA subfamily. Homotetramer. FMN serves as cofactor.

It carries out the reaction A + NADPH + H(+) = AH2 + NADP(+). In terms of biological role, catalyzes the reduction of the double bond of an array of alpha,beta-unsaturated aldehydes and ketones. It also reduces the nitro group of nitroester and nitroaromatic compounds. It could have a role in detoxification processes. This chain is NADPH dehydrogenase, found in Bacillus cytotoxicus (strain DSM 22905 / CIP 110041 / 391-98 / NVH 391-98).